Consider the following 394-residue polypeptide: Gap junction gamma-1 protein (394 aa).

The Cytoplasmic segment spans residues methionine 1–lysine 22. The chain crosses the membrane as a helical span at residues isoleucine 23–tyrosine 45. At aspartate 46–arginine 75 the chain is on the extracellular side. Residues phenylalanine 76–alanine 95 traverse the membrane as a helical segment. Residues isoleucine 96–arginine 176 are Cytoplasmic-facing. Residues isoleucine 177–leucine 199 traverse the membrane as a helical segment. The Extracellular portion of the chain corresponds to tyrosine 200–lysine 229. The chain crosses the membrane as a helical span at residues threonine 230 to leucine 252. Over histidine 253–isoleucine 394 the chain is Cytoplasmic. The segment at isoleucine 354–isoleucine 394 is disordered. Residues alanine 356–serine 366 are compositionally biased toward polar residues. Residues alanine 374–isoleucine 394 show a composition bias toward low complexity.

Belongs to the connexin family. Gamma-type subfamily. A connexon is composed of a hexamer of connexins. In terms of tissue distribution, mostly in heart and stomach.

It is found in the cell membrane. The protein localises to the cell junction. It localises to the gap junction. Functionally, one gap junction consists of a cluster of closely packed pairs of transmembrane channels, the connexons, through which materials of low MW diffuse from one cell to a neighboring cell. This Gallus gallus (Chicken) protein is Gap junction gamma-1 protein (GJC1).